Here is a 597-residue protein sequence, read N- to C-terminus: (E)-sabinene hydrate synthase, chloroplastic (597 aa).

The N-terminal 47 residues, Met-1–Arg-47, are a transit peptide targeting the chloroplast. Residues Asp-353 and Asp-357 each coordinate Mn(2+). Positions Asp-353–Asp-357 match the DDXXD motif motif. 2 homodimerization regions span residues Tyr-359–Leu-365 and Glu-431–Pro-468. Positions 495 and 503 each coordinate Mn(2+).

The protein belongs to the terpene synthase family. Homodimer. Mn(2+) is required as a cofactor. Mg(2+) serves as cofactor.

The protein resides in the plastid. It localises to the chloroplast. The catalysed reaction is (2E)-geranyl diphosphate + H2O = sabinene hydrate + diphosphate. It participates in secondary metabolite biosynthesis; terpenoid biosynthesis. Involved in the biosynthesis of phenolic monoterpenes natural products. Monoterpene synthase which catalyzes the conversion of geranyl diphosphate (GPP) to sabinene hydrate, specifically (E)-sabinene hydrate, and the formation of minor amounts and traces of several other monoterpenes (e.g. mainly alpha-pinene, limonene and alpha-terpineol). This chain is (E)-sabinene hydrate synthase, chloroplastic, found in Thymus vulgaris (Thyme).